A 220-amino-acid chain; its full sequence is Redox-sensing transcriptional repressor Rex (220 aa).

The H-T-H motif DNA-binding region spans 16–55 (MYVQVLETLKREGSQVVSSELLARTCSVNPSQIRKDLAYF). An NAD(+)-binding site is contributed by 90–95 (GIGNLG).

The protein belongs to the transcriptional regulatory Rex family. Homodimer.

It is found in the cytoplasm. In terms of biological role, modulates transcription in response to changes in cellular NADH/NAD(+) redox state. This is Redox-sensing transcriptional repressor Rex from Solidesulfovibrio magneticus (strain ATCC 700980 / DSM 13731 / RS-1) (Desulfovibrio magneticus).